Consider the following 469-residue polypeptide: MNPNQKIITIGSVSLTIATICFLMQIAILVTTVTLHFKQYECDSPANNQVMPCEPIIIERNITEIVYLTNTTIEKEICPKLVEYRNWSKPQCKITGFAPFSKDNSIRLSAGGDIWVTREPYVSCDPGKCYQFALGQGTTLDNKHSNDTIHDRTPHRTLLMNELGVPFHLGTRQVCIAWSSSSCHDGKAWLHVCVTGYDKNATASFIYDGRLVDSIGSWSQNILRTQESECVCINGTCTVVMTDGSASGRADTKILFIEEGKIVHTSPLSGSAQHVEECSCYPRYPGVRCICRDNWKGSNRPVVDINVKDYSIDSSYVCSGLVGDTPRNNDRSSSSYCRNPNNEKGTHGVKGWAFDDGNDVWMGRTISEDSRSGYETFKVIGGWSTPNSKLQINRQVIVDSDNRSGYSGIFSVEGKSCINRCFYVELIRGREQETRVWWTSNSIVVFCGTSGTYGTGSWPDGADINLMPI.

At 1 to 9 (MNPNQKIIT) the chain is on the intravirion side. A helical membrane pass occupies residues 10–30 (IGSVSLTIATICFLMQIAILV). Residues 11-33 (GSVSLTIATICFLMQIAILVTTV) are involved in apical transport and lipid raft association. The Virion surface portion of the chain corresponds to 31 to 469 (TTVTLHFKQY…DGADINLMPI (439 aa)). The tract at residues 36-88 (HFKQYECDSPANNQVMPCEPIIIERNITEIVYLTNTTIEKEICPKLVEYRNWS) is hypervariable stalk region. Residues Asn-61, Asn-70, and Asn-86 are each glycosylated (N-linked (GlcNAc...) asparagine; by host). A head of neuraminidase region spans residues 91 to 469 (QCKITGFAPF…DGADINLMPI (379 aa)). Disulfide bonds link Cys-92–Cys-417, Cys-124–Cys-129, Cys-183–Cys-230, Cys-232–Cys-237, Cys-278–Cys-291, Cys-280–Cys-289, Cys-318–Cys-337, and Cys-421–Cys-447. Arg-118 contacts substrate. Asn-146 carries N-linked (GlcNAc...) asparagine; by host glycosylation. The Proton donor/acceptor role is filled by Asp-151. Arg-152 lines the substrate pocket. Asn-200 and Asn-234 each carry an N-linked (GlcNAc...) asparagine; by host glycan. 276 to 277 (EE) serves as a coordination point for substrate. Arg-292 serves as a coordination point for substrate. Ca(2+)-binding residues include Asp-293, Gly-297, and Asp-324. A substrate-binding site is contributed by Arg-371. A glycan (N-linked (GlcNAc...) asparagine; by host) is linked at Asn-402. Tyr-406 (nucleophile) is an active-site residue.

Belongs to the glycosyl hydrolase 34 family. In terms of assembly, homotetramer. Requires Ca(2+) as cofactor. Post-translationally, N-glycosylated.

It localises to the virion membrane. Its subcellular location is the host apical cell membrane. The catalysed reaction is Hydrolysis of alpha-(2-&gt;3)-, alpha-(2-&gt;6)-, alpha-(2-&gt;8)- glycosidic linkages of terminal sialic acid residues in oligosaccharides, glycoproteins, glycolipids, colominic acid and synthetic substrates.. With respect to regulation, inhibited by the neuraminidase inhibitors zanamivir (Relenza) and oseltamivir (Tamiflu). These drugs interfere with the release of progeny virus from infected cells and are effective against all influenza strains. Resistance to neuraminidase inhibitors is quite rare. In terms of biological role, catalyzes the removal of terminal sialic acid residues from viral and cellular glycoconjugates. Cleaves off the terminal sialic acids on the glycosylated HA during virus budding to facilitate virus release. Additionally helps virus spread through the circulation by further removing sialic acids from the cell surface. These cleavages prevent self-aggregation and ensure the efficient spread of the progeny virus from cell to cell. Otherwise, infection would be limited to one round of replication. Described as a receptor-destroying enzyme because it cleaves a terminal sialic acid from the cellular receptors. May facilitate viral invasion of the upper airways by cleaving the sialic acid moieties on the mucin of the airway epithelial cells. Likely to plays a role in the budding process through its association with lipid rafts during intracellular transport. May additionally display a raft-association independent effect on budding. Plays a role in the determination of host range restriction on replication and virulence. Sialidase activity in late endosome/lysosome traffic seems to enhance virus replication. The protein is Neuraminidase of Aves (whales).